The following is a 486-amino-acid chain: Ribulose bisphosphate carboxylase large chain (486 aa).

Substrate contacts are provided by Asn-126 and Thr-176. Lys-178 (proton acceptor) is an active-site residue. Lys-180 provides a ligand contact to substrate. Lys-204, Asp-206, and Glu-207 together coordinate Mg(2+). Lys-204 bears the N6-carboxylysine mark. The active-site Proton acceptor is His-296. Substrate is bound by residues Arg-297, His-329, and Ser-381.

It belongs to the RuBisCO large chain family. Type I subfamily. Heterohexadecamer of 8 large chains and 8 small chains. It depends on Mg(2+) as a cofactor.

It catalyses the reaction 2 (2R)-3-phosphoglycerate + 2 H(+) = D-ribulose 1,5-bisphosphate + CO2 + H2O. It carries out the reaction D-ribulose 1,5-bisphosphate + O2 = 2-phosphoglycolate + (2R)-3-phosphoglycerate + 2 H(+). RuBisCO catalyzes two reactions: the carboxylation of D-ribulose 1,5-bisphosphate, the primary event in carbon dioxide fixation, as well as the oxidative fragmentation of the pentose substrate. Both reactions occur simultaneously and in competition at the same active site. In Cupriavidus taiwanensis (strain DSM 17343 / BCRC 17206 / CCUG 44338 / CIP 107171 / LMG 19424 / R1) (Ralstonia taiwanensis (strain LMG 19424)), this protein is Ribulose bisphosphate carboxylase large chain.